The following is a 410-amino-acid chain: Peptidase T (410 aa).

His79 contributes to the Zn(2+) binding site. The active site involves Asp81. Asp142 serves as a coordination point for Zn(2+). Residue Glu176 is the Proton acceptor of the active site. 3 residues coordinate Zn(2+): Glu177, Asp199, and His381.

The protein belongs to the peptidase M20B family. The cofactor is Zn(2+).

The protein resides in the cytoplasm. It carries out the reaction Release of the N-terminal residue from a tripeptide.. Cleaves the N-terminal amino acid of tripeptides. The protein is Peptidase T of Bacillus cereus (strain B4264).